The chain runs to 189 residues: UPF0301 protein PFLU_5755 (189 aa).

The protein belongs to the UPF0301 (AlgH) family.

This chain is UPF0301 protein PFLU_5755, found in Pseudomonas fluorescens (strain SBW25).